The primary structure comprises 208 residues: Thiamine-phosphate synthase (208 aa).

4-amino-2-methyl-5-(diphosphooxymethyl)pyrimidine is bound by residues 37 to 39 and N70; that span reads QVR. Residues D71 and D90 each coordinate Mg(2+). T109 is a binding site for 4-amino-2-methyl-5-(diphosphooxymethyl)pyrimidine. 135–137 contacts 2-[(2R,5Z)-2-carboxy-4-methylthiazol-5(2H)-ylidene]ethyl phosphate; it reads TTS. A 4-amino-2-methyl-5-(diphosphooxymethyl)pyrimidine-binding site is contributed by K138. A 2-[(2R,5Z)-2-carboxy-4-methylthiazol-5(2H)-ylidene]ethyl phosphate-binding site is contributed by A166.

The protein belongs to the thiamine-phosphate synthase family. The cofactor is Mg(2+).

The catalysed reaction is 2-[(2R,5Z)-2-carboxy-4-methylthiazol-5(2H)-ylidene]ethyl phosphate + 4-amino-2-methyl-5-(diphosphooxymethyl)pyrimidine + 2 H(+) = thiamine phosphate + CO2 + diphosphate. It catalyses the reaction 2-(2-carboxy-4-methylthiazol-5-yl)ethyl phosphate + 4-amino-2-methyl-5-(diphosphooxymethyl)pyrimidine + 2 H(+) = thiamine phosphate + CO2 + diphosphate. The enzyme catalyses 4-methyl-5-(2-phosphooxyethyl)-thiazole + 4-amino-2-methyl-5-(diphosphooxymethyl)pyrimidine + H(+) = thiamine phosphate + diphosphate. The protein operates within cofactor biosynthesis; thiamine diphosphate biosynthesis; thiamine phosphate from 4-amino-2-methyl-5-diphosphomethylpyrimidine and 4-methyl-5-(2-phosphoethyl)-thiazole: step 1/1. Its function is as follows. Condenses 4-methyl-5-(beta-hydroxyethyl)thiazole monophosphate (THZ-P) and 2-methyl-4-amino-5-hydroxymethyl pyrimidine pyrophosphate (HMP-PP) to form thiamine monophosphate (TMP). In Salinispora tropica (strain ATCC BAA-916 / DSM 44818 / JCM 13857 / NBRC 105044 / CNB-440), this protein is Thiamine-phosphate synthase.